We begin with the raw amino-acid sequence, 291 residues long: Diaminopimelate epimerase (291 aa).

Asparagine 13, glutamine 46, and asparagine 66 together coordinate substrate. The Proton donor role is filled by cysteine 75. Substrate is bound by residues 76–77, asparagine 170, asparagine 203, and 221–222; these read GN and ER. Catalysis depends on cysteine 230, which acts as the Proton acceptor. A substrate-binding site is contributed by 231 to 232; that stretch reads GS.

The protein belongs to the diaminopimelate epimerase family. Homodimer.

It localises to the cytoplasm. It carries out the reaction (2S,6S)-2,6-diaminopimelate = meso-2,6-diaminopimelate. It functions in the pathway amino-acid biosynthesis; L-lysine biosynthesis via DAP pathway; DL-2,6-diaminopimelate from LL-2,6-diaminopimelate: step 1/1. Catalyzes the stereoinversion of LL-2,6-diaminopimelate (L,L-DAP) to meso-diaminopimelate (meso-DAP), a precursor of L-lysine and an essential component of the bacterial peptidoglycan. The chain is Diaminopimelate epimerase from Albidiferax ferrireducens (strain ATCC BAA-621 / DSM 15236 / T118) (Rhodoferax ferrireducens).